Consider the following 221-residue polypeptide: uncharacterized protein (221 aa).

4 helical membrane passes run 30–50 (FGIFLALSIEFIPAEVVLPLA), 62–82 (AGVVLAGSLGGVAGPLTLYWI), 144–164 (VWVFSLYTFIAMLPITFVYVY), and 179–199 (ILDQYMLPIGIAILALFLLYL).

Belongs to the DedA family.

It is found in the cell membrane. This is an uncharacterized protein from Bacillus subtilis (strain 168).